The primary structure comprises 285 residues: NAD kinase (285 aa).

The active-site Proton acceptor is the aspartate 66. Residues 66–67 (DG), 137–138 (ND), arginine 148, arginine 165, aspartate 167, and 178–183 (TAYSLS) each bind NAD(+).

The protein belongs to the NAD kinase family. A divalent metal cation serves as cofactor.

It is found in the cytoplasm. The enzyme catalyses NAD(+) + ATP = ADP + NADP(+) + H(+). Involved in the regulation of the intracellular balance of NAD and NADP, and is a key enzyme in the biosynthesis of NADP. Catalyzes specifically the phosphorylation on 2'-hydroxyl of the adenosine moiety of NAD to yield NADP. The protein is NAD kinase of Prosthecochloris aestuarii (strain DSM 271 / SK 413).